The primary structure comprises 506 residues: tRNA (guanine(6)-N(2))-methyltransferase THUMP3 (506 aa).

The tract at residues 144–172 is disordered; it reads KTKRRKLNPNSSKQKIDNGRGDTTVEKDV. The segment covering 157 to 172 has biased composition (basic and acidic residues); that stretch reads QKIDNGRGDTTVEKDV. The THUMP domain occupies 170 to 286; sequence KDVKKELTNS…DNEVVVGIAL (117 aa).

This sequence belongs to the methyltransferase superfamily. As to quaternary structure, part of the heterodimeric THUMPD3-TRM112 methyltransferase complex; this complex forms an active tRNA methyltransferase, where TRMT112 acts as an activator of the catalytic subunit THUMPD3.

It is found in the cytoplasm. It catalyses the reaction guanosine(6) in tRNA + S-adenosyl-L-methionine = N(2)-methylguanosine(6) in tRNA + S-adenosyl-L-homocysteine + H(+). The catalysed reaction is guanosine(7) in tRNA + S-adenosyl-L-methionine = N(2)-methylguanosine(7) in tRNA + S-adenosyl-L-homocysteine + H(+). Functionally, catalytic subunit of the THUMPD3-TRM112 methyltransferase complex, that specifically mediates the S-adenosyl-L-methionine-dependent N(2)-methylation of guanosine nucleotide at position 6 (m2G6) in tRNAs. This is one of the major tRNA (guanine-N(2))-methyltransferases. Also catalyzes the S-adenosyl-L-methionine-dependent N(2)-methylation of guanosine nucleotide at position 7 of tRNA(Trp). In Bos taurus (Bovine), this protein is tRNA (guanine(6)-N(2))-methyltransferase THUMP3.